The primary structure comprises 445 residues: Alpha-1,3-mannosyl-glycoprotein 2-beta-N-acetylglucosaminyltransferase (445 aa).

Residues 1–6 lie on the Cytoplasmic side of the membrane; the sequence is MLKKQS. Residues 7-29 traverse the membrane as a helical; Signal-anchor for type II membrane protein segment; it reads AGLVLWGAILFVAWNALLLLFFW. The Lumenal portion of the chain corresponds to 30-445; it reads TRPAPGRPPS…TWEGYDPSWN (416 aa). C113 and C143 are joined by a disulfide. The substrate site is built by R115, D142, H188, and D210. Residue D211 coordinates Mn(2+). An intrachain disulfide couples C237 to C303. The active-site Proton acceptor is D289. Residue S320 participates in substrate binding.

Belongs to the glycosyltransferase 13 family. As to quaternary structure, interacts with MGAT4D. Interacts with BRI3 (isoforms 1 and 2); the interaction with isoform 2 is weaker than with isoform 1. It depends on Mn(2+) as a cofactor.

It localises to the golgi apparatus membrane. Its subcellular location is the cytoplasm. It is found in the perinuclear region. It catalyses the reaction N(4)-(alpha-D-Man-(1-&gt;3)-[alpha-D-Man-(1-&gt;3)-[alpha-D-Man-(1-&gt;6)]-alpha-D-Man-(1-&gt;6)]-beta-D-Man-(1-&gt;4)-beta-D-GlcNAc-(1-&gt;4)-beta-D-GlcNAc)-L-asparaginyl-[protein] (N-glucan mannose isomer 5A1,2) + UDP-N-acetyl-alpha-D-glucosamine = N(4)-{beta-D-GlcNAc-(1-&gt;2)-alpha-D-Man-(1-&gt;3)-[alpha-D-Man-(1-&gt;3)-[alpha-D-Man-(1-&gt;6)]-alpha-D-Man-(1-&gt;6)]-beta-D-Man-(1-&gt;4)-beta-D-GlcNAc-(1-&gt;4)-beta-D-GlcNAc}-L-asparaginyl-[protein] + UDP + H(+). It participates in protein modification; protein glycosylation. In terms of biological role, initiates complex N-linked carbohydrate formation. Essential for the conversion of high-mannose to hybrid and complex N-glycans. The chain is Alpha-1,3-mannosyl-glycoprotein 2-beta-N-acetylglucosaminyltransferase (MGAT1) from Homo sapiens (Human).